A 356-amino-acid polypeptide reads, in one-letter code: C-C chemokine receptor 1-like protein 1 (356 aa).

At 1–32 the chain is on the extracellular side; the sequence is MEIPAVTEPSYNTVAKNDFMSGFLCFSINVRA. The chain crosses the membrane as a helical span at residues 33 to 60; the sequence is FGITVLTPLYSLVFIIGVIGHVLVVLVL. Residues 61–67 are Cytoplasmic-facing; it reads IQHKRLR. Residues 68–92 form a helical membrane-spanning segment; that stretch reads NMTSIYLFNLAISDLVFLSTLPFWV. The Extracellular segment spans residues 93–108; sequence DYIMKGDWIFGNAMCK. Cysteine 107 and cysteine 184 are oxidised to a cystine. Residues 109-130 form a helical membrane-spanning segment; the sequence is FVSGFYYLGLYSDMFFITLLTI. Over 131 to 147 the chain is Cytoplasmic; it reads DRYLAVVHVVFALRART. A helical transmembrane segment spans residues 148 to 172; that stretch reads VTFGIISSIITWVLAALVSIPCLYV. At 173 to 198 the chain is on the extracellular side; sequence FKSQMEFTYHTCRAILPRKSLIRFLR. A helical membrane pass occupies residues 199 to 224; the sequence is FQALTMNILGLILPLLAMIICYTRII. Residues 225-240 lie on the Cytoplasmic side of the membrane; the sequence is NVLHRRPNKKKAKVMR. The helical transmembrane segment at 241-265 threads the bilayer; it reads LIFVITLLFFLLLAPYYLAAFVSAF. Topologically, residues 266–282 are extracellular; it reads EDVLFTPSCLRSQQVDL. A helical membrane pass occupies residues 283–306; sequence SLMITEALAYTHCCVNPVIYVFVG. Over 307 to 356 the chain is Cytoplasmic; that stretch reads KRFRKYLWQLFRRHTAITLPQWLPFLSVDRAQRASATPPSTVEIETSADL.

This sequence belongs to the G-protein coupled receptor 1 family. Detected in the spleen, liver and leukocytes.

Its subcellular location is the cell membrane. Functionally, probable receptor for a C-C type chemokine. This chain is C-C chemokine receptor 1-like protein 1 (Ccr1l1), found in Mus musculus (Mouse).